The following is a 447-amino-acid chain: N-succinylarginine dihydrolase (447 aa).

Residues Ala-19–Ser-28, Asn-110, and His-137–Arg-138 contribute to the substrate site. Glu-174 is a catalytic residue. Position 212 (Arg-212) interacts with substrate. His-248 is an active-site residue. Substrate-binding residues include Asp-250 and Asn-359. The active-site Nucleophile is Cys-365.

This sequence belongs to the succinylarginine dihydrolase family. In terms of assembly, homodimer.

The enzyme catalyses N(2)-succinyl-L-arginine + 2 H2O + 2 H(+) = N(2)-succinyl-L-ornithine + 2 NH4(+) + CO2. It participates in amino-acid degradation; L-arginine degradation via AST pathway; L-glutamate and succinate from L-arginine: step 2/5. Functionally, catalyzes the hydrolysis of N(2)-succinylarginine into N(2)-succinylornithine, ammonia and CO(2). This Escherichia coli (strain ATCC 8739 / DSM 1576 / NBRC 3972 / NCIMB 8545 / WDCM 00012 / Crooks) protein is N-succinylarginine dihydrolase.